Consider the following 240-residue polypeptide: Tubulin alpha chain (240 aa).

A GTP-binding site is contributed by N17. E43 is an active-site residue.

Belongs to the tubulin family. Dimer of alpha and beta chains. A typical microtubule is a hollow water-filled tube with an outer diameter of 25 nm and an inner diameter of 15 nM. Alpha-beta heterodimers associate head-to-tail to form protofilaments running lengthwise along the microtubule wall with the beta-tubulin subunit facing the microtubule plus end conferring a structural polarity. Microtubules usually have 13 protofilaments but different protofilament numbers can be found in some organisms and specialized cells. It depends on Mg(2+) as a cofactor. Post-translationally, undergoes a tyrosination/detyrosination cycle, the cyclic removal and re-addition of a C-terminal tyrosine residue by the enzymes tubulin tyrosine carboxypeptidase (TTCP) and tubulin tyrosine ligase (TTL), respectively.

It localises to the cytoplasm. It is found in the cytoskeleton. The catalysed reaction is GTP + H2O = GDP + phosphate + H(+). Its function is as follows. Tubulin is the major constituent of microtubules, a cylinder consisting of laterally associated linear protofilaments composed of alpha- and beta-tubulin heterodimers. Microtubules grow by the addition of GTP-tubulin dimers to the microtubule end, where a stabilizing cap forms. Below the cap, tubulin dimers are in GDP-bound state, owing to GTPase activity of alpha-tubulin. This chain is Tubulin alpha chain, found in Octopus vulgaris (Common octopus).